Reading from the N-terminus, the 279-residue chain is Putative pyruvate, phosphate dikinase regulatory protein (279 aa).

152-159 (GVSRTSKS) contributes to the ADP binding site.

The protein belongs to the pyruvate, phosphate/water dikinase regulatory protein family. PDRP subfamily.

It carries out the reaction N(tele)-phospho-L-histidyl/L-threonyl-[pyruvate, phosphate dikinase] + ADP = N(tele)-phospho-L-histidyl/O-phospho-L-threonyl-[pyruvate, phosphate dikinase] + AMP + H(+). It catalyses the reaction N(tele)-phospho-L-histidyl/O-phospho-L-threonyl-[pyruvate, phosphate dikinase] + phosphate + H(+) = N(tele)-phospho-L-histidyl/L-threonyl-[pyruvate, phosphate dikinase] + diphosphate. In terms of biological role, bifunctional serine/threonine kinase and phosphorylase involved in the regulation of the pyruvate, phosphate dikinase (PPDK) by catalyzing its phosphorylation/dephosphorylation. The polypeptide is Putative pyruvate, phosphate dikinase regulatory protein (Anaplasma marginale (strain Florida)).